The following is a 944-amino-acid chain: Putative alpha,alpha-trehalose-phosphate synthase [UDP-forming] 106 kDa subunit (944 aa).

Residues 73–84 are compositionally biased toward polar residues; sequence TNAQSNIATPSP. 2 disordered regions span residues 73–113 and 129–166; these read TNAQ…NSLS and SKND…SELE. Positions 101-113 are enriched in low complexity; that stretch reads PSSDSPSLENSLS. Phosphoserine is present on residues Ser141, Ser145, Ser149, Ser150, Ser163, and Ser177. A glycosyltransferase region spans residues 173-652; that stretch reads SRSLSFSMNG…AVTFQSLIKE (480 aa). Thr189 is subject to Phosphothreonine.

This sequence in the N-terminal section; belongs to the glycosyltransferase 20 family.

The catalysed reaction is D-glucose 6-phosphate + UDP-alpha-D-glucose = alpha,alpha-trehalose 6-phosphate + UDP + H(+). The chain is Putative alpha,alpha-trehalose-phosphate synthase [UDP-forming] 106 kDa subunit from Schizosaccharomyces pombe (strain 972 / ATCC 24843) (Fission yeast).